The following is a 350-amino-acid chain: Chorismate synthase (350 aa).

Position 48 (Arg48) interacts with NADP(+). FMN contacts are provided by residues 125–127 (RSS), Gly277, 292–296 (KPIPS), and Arg318.

The protein belongs to the chorismate synthase family. Homotetramer. FMNH2 serves as cofactor.

It catalyses the reaction 5-O-(1-carboxyvinyl)-3-phosphoshikimate = chorismate + phosphate. It functions in the pathway metabolic intermediate biosynthesis; chorismate biosynthesis; chorismate from D-erythrose 4-phosphate and phosphoenolpyruvate: step 7/7. In terms of biological role, catalyzes the anti-1,4-elimination of the C-3 phosphate and the C-6 proR hydrogen from 5-enolpyruvylshikimate-3-phosphate (EPSP) to yield chorismate, which is the branch point compound that serves as the starting substrate for the three terminal pathways of aromatic amino acid biosynthesis. This reaction introduces a second double bond into the aromatic ring system. This chain is Chorismate synthase, found in Maridesulfovibrio salexigens (strain ATCC 14822 / DSM 2638 / NCIMB 8403 / VKM B-1763) (Desulfovibrio salexigens).